The following is a 298-amino-acid chain: Aspartate carbamoyltransferase catalytic subunit (298 aa).

The carbamoyl phosphate site is built by Arg-54 and Thr-55. Lys-82 is an L-aspartate binding site. Carbamoyl phosphate contacts are provided by Arg-104, His-132, and Gln-135. L-aspartate-binding residues include Arg-165 and Arg-218. Residues Gly-260 and Pro-261 each coordinate carbamoyl phosphate.

It belongs to the aspartate/ornithine carbamoyltransferase superfamily. ATCase family. Heterododecamer (2C3:3R2) of six catalytic PyrB chains organized as two trimers (C3), and six regulatory PyrI chains organized as three dimers (R2).

It carries out the reaction carbamoyl phosphate + L-aspartate = N-carbamoyl-L-aspartate + phosphate + H(+). The protein operates within pyrimidine metabolism; UMP biosynthesis via de novo pathway; (S)-dihydroorotate from bicarbonate: step 2/3. Catalyzes the condensation of carbamoyl phosphate and aspartate to form carbamoyl aspartate and inorganic phosphate, the committed step in the de novo pyrimidine nucleotide biosynthesis pathway. This Wolbachia sp. subsp. Brugia malayi (strain TRS) protein is Aspartate carbamoyltransferase catalytic subunit.